The chain runs to 247 residues: MPGRSSSNSGSTGFISFSGVESALSSLKNFQACINSGMDTASSVALDLVESQTEVSSEYSMDKAMVEFATLDRQLNHYVKAVQSTINHVKEERPEKIPDLKLLVEKKFLALQSKNSDADFQNNEKFVQFKQQLKELKKQCGLQADREADGTEGVDEDIIVTQSQTNFTCPITKEEMKKPVKNKVCGHTYEEDAIVRMIESRQKRKKKAYCPQIGCSHTDIRKSDLIQDEALRRAIENHNKKRHRHSE.

Met-1 is modified (N-acetylmethionine). Glycyl lysine isopeptide (Lys-Gly) (interchain with G-Cter in SUMO2) cross-links involve residues Lys-90 and Lys-107. Position 116 is a phosphoserine (Ser-116). Residues Lys-125 and Lys-130 each participate in a glycyl lysine isopeptide (Lys-Gly) (interchain with G-Cter in SUMO2) cross-link. The SP-RING-type zinc-finger motif lies at 154 to 240 (VDEDIIVTQS…LRRAIENHNK (87 aa)). Residues Cys-185, His-187, Cys-210, and Cys-215 each contribute to the Zn(2+) site.

It belongs to the NSE2 family. Component of the SMC5-SMC6 complex which consists at least of SMC5, SMC6, NSMCE2, NSMCE1, NSMCE4A or EID3 and NSMCE3. In terms of processing, sumoylated, possibly via autosumoylation.

Its subcellular location is the nucleus. It is found in the chromosome. It localises to the telomere. The protein resides in the PML body. Its pathway is protein modification; protein sumoylation. Functionally, E3 SUMO-protein ligase component of the SMC5-SMC6 complex, a complex involved in DNA double-strand break repair by homologous recombination. Is not be required for the stability of the complex. The complex may promote sister chromatid homologous recombination by recruiting the SMC1-SMC3 cohesin complex to double-strand breaks. The complex is required for telomere maintenance via recombination in ALT (alternative lengthening of telomeres) cell lines and mediates sumoylation of shelterin complex (telosome) components which is proposed to lead to shelterin complex disassembly in ALT-associated PML bodies (APBs). Acts as an E3 ligase mediating SUMO attachment to various proteins such as SMC6L1 and TSNAX, the shelterin complex subunits TERF1, TERF2, TINF2 and TERF2IP, RAD51AP1, and maybe the cohesin components RAD21 and STAG2. Required for recruitment of telomeres to PML nuclear bodies. SUMO protein-ligase activity is required for the prevention of DNA damage-induced apoptosis by facilitating DNA repair, and for formation of APBs in ALT cell lines. Required for sister chromatid cohesion during prometaphase and mitotic progression. In Homo sapiens (Human), this protein is E3 SUMO-protein ligase NSE2 (NSMCE2).